A 448-amino-acid chain; its full sequence is Selenide, water dikinase 2 (448 aa).

Ala2 is modified (N-acetylalanine). The residue at position 46 (Ser46) is a Phosphoserine. Sec60 is a catalytic residue. Position 60 (Sec60) is a non-standard amino acid, selenocysteine. Lys63 contributes to the ATP binding site. Residues 85–107 (LGRGLVGGQEEASQEAGLPAGAG) form a disordered region. Ser97 bears the Phosphoserine mark. Residues 118 to 120 (GMD), Asp138, Asp161, and 212 to 215 (GGQT) contribute to the ATP site. Residue Asp120 participates in Mg(2+) binding. Residue Asp161 participates in Mg(2+) binding. A Mg(2+)-binding site is contributed by Asp316.

This sequence belongs to the selenophosphate synthase 1 family. Class I subfamily. As to quaternary structure, homodimer. The cofactor is Mg(2+). Truncated SEPHS2 proteins produced by failed UGA/Sec decoding are ubiquitinated by the CRL2(KLHDC3) complex, which recognizes the glycine (Gly) at the C-terminus of truncated SEPHS2 proteins.

The enzyme catalyses hydrogenselenide + ATP + H2O = selenophosphate + AMP + phosphate + 2 H(+). Synthesizes selenophosphate from selenide and ATP. The protein is Selenide, water dikinase 2 (SEPHS2) of Homo sapiens (Human).